Consider the following 113-residue polypeptide: ATP synthase epsilon chain (113 aa).

It belongs to the ATPase epsilon chain family. F-type ATPases have 2 components, CF(1) - the catalytic core - and CF(0) - the membrane proton channel. CF(1) has five subunits: alpha(3), beta(3), gamma(1), delta(1), epsilon(1). CF(0) has three main subunits: a, b and c.

The protein resides in the cell membrane. Produces ATP from ADP in the presence of a proton gradient across the membrane. This Wolbachia pipientis subsp. Culex pipiens (strain wPip) protein is ATP synthase epsilon chain.